Here is a 173-residue protein sequence, read N- to C-terminus: NADH-ubiquinone oxidoreductase chain 6 (173 aa).

5 helical membrane passes run 1–21 (MTYF…AVAS), 27–47 (YGVV…LSLG), 48–68 (VSFV…VVFV), 87–107 (VVGY…VGGL), and 139–159 (CGVG…FVVL).

This sequence belongs to the complex I subunit 6 family.

The protein resides in the mitochondrion membrane. It catalyses the reaction a ubiquinone + NADH + 5 H(+)(in) = a ubiquinol + NAD(+) + 4 H(+)(out). Its function is as follows. Core subunit of the mitochondrial membrane respiratory chain NADH dehydrogenase (Complex I) that is believed to belong to the minimal assembly required for catalysis. Complex I functions in the transfer of electrons from NADH to the respiratory chain. The immediate electron acceptor for the enzyme is believed to be ubiquinone. The protein is NADH-ubiquinone oxidoreductase chain 6 (MT-ND6) of Larus canus (Common gull).